A 55-amino-acid chain; its full sequence is Large ribosomal subunit protein bL33 (55 aa).

This sequence belongs to the bacterial ribosomal protein bL33 family.

The chain is Large ribosomal subunit protein bL33 from Rhodopseudomonas palustris (strain BisB18).